The primary structure comprises 162 residues: UPF0114 protein Shewmr4_0646 (162 aa).

Helical transmembrane passes span 15 to 35 (IMAPIYLGLSLVLLGLGIKFF), 53 to 73 (LVLVTLSLIDITLVGGLIVMV), 108 to 128 (KVAASIVAISSIHLLKIFMDV), and 136 to 156 (IMWYLLIHITFVVSAFAMGYL).

The protein belongs to the UPF0114 family.

It is found in the cell membrane. This Shewanella sp. (strain MR-4) protein is UPF0114 protein Shewmr4_0646.